Reading from the N-terminus, the 115-residue chain is NADH-ubiquinone oxidoreductase chain 3 (115 aa).

Helical transmembrane passes span 3–23 (LMLA…IAFW), 55–75 (FFLV…LLPL), and 84–104 (LNTM…SLAY).

The protein belongs to the complex I subunit 3 family. Core subunit of respiratory chain NADH dehydrogenase (Complex I) which is composed of 45 different subunits. Interacts with TMEM186. Interacts with TMEM242.

It localises to the mitochondrion inner membrane. The catalysed reaction is a ubiquinone + NADH + 5 H(+)(in) = a ubiquinol + NAD(+) + 4 H(+)(out). In terms of biological role, core subunit of the mitochondrial membrane respiratory chain NADH dehydrogenase (Complex I) which catalyzes electron transfer from NADH through the respiratory chain, using ubiquinone as an electron acceptor. Essential for the catalytic activity of complex I. This Bos indicus (Zebu) protein is NADH-ubiquinone oxidoreductase chain 3.